The chain runs to 469 residues: Desmin (469 aa).

The interval 2–107 is head; the sequence is SQAYSSSQRV…QEFLTTRTNE (106 aa). Ser7 is subject to Phosphoserine; by CDK1. Phosphoserine; by AURKB is present on Ser12. The residue at position 16 (Arg16) is an Omega-N-methylarginine. Thr17 bears the Phosphothreonine; by AURKB and ROCK1 mark. Phosphoserine; by CDK1 is present on residues Ser28 and Ser32. Residue Arg37 is modified to Asymmetric dimethylarginine; alternate. Arg37 bears the Omega-N-methylarginine; alternate mark. Position 45 is a phosphoserine (Ser45). Arg58 carries the ADP-ribosylarginine modification. At Ser60 the chain carries Phosphoserine; by AURKB. Omega-N-methylarginine is present on Arg70. The residue at position 76 (Thr76) is a Phosphothreonine; by ROCK1. Phosphoserine is present on Ser81. The region spanning 107–415 is the IF rod domain; sequence EKVELQELND…KLLEGEESRI (309 aa). The interval 108–140 is coil 1A; the sequence is KVELQELNDRFANYIEKVRFLEQQNAALAAEVN. The interval 141 to 150 is linker 1; sequence RLKGREPTRV. Positions 151–251 are coil 1B; it reads AEIYEEELRE…HEEEIRELQA (101 aa). The segment at 252–267 is linker 12; it reads QLQEQQVQVEMDMSKP. Positions 267–414 are interaction with NEB; the sequence is PDLTAALRDI…RKLLEGEESR (148 aa). Residues 268-286 form a coil 2A region; it reads DLTAALRDIRAQYETIAAK. Positions 287–294 are linker 2; that stretch reads NISEAEEW. Phosphoserine is present on residues Ser289, Ser357, Ser360, and Ser423. Residues 295-411 are coil 2B; the sequence is YKSKVSDLTQ…ATYRKLLEGE (117 aa). Residues 412–469 form a tail region; the sequence is ESRINLPIQTYSALNFRETSPEQRGSEVHTKKTVMIKTIETRDGEVVSEATQQQHEVL. An interaction with CRYAB region spans residues 437–452; the sequence is SEVHTKKTVMIKTIET.

This sequence belongs to the intermediate filament family. As to quaternary structure, homomer. Interacts with DST. Interacts with MTM1. Interacts with EPPK1; interaction is dependent of higher-order structure of intermediate filament. Interacts with CRYAB. Interacts with NEB (via nebulin repeats 160-164). Interacts (via rod region) with NEBL (via nebulin repeats 1-5). Interacts with ASB2; the interaction targets DES for proteasomal degradation. Interacts with PKP1. Interacts with FLII. Post-translationally, ADP-ribosylation prevents ability to form intermediate filaments. In terms of processing, phosphorylation at Ser-7, Ser-28 and Ser-32 by CDK1, phosphorylation at Ser-60 by AURKB and phosphorylation at Thr-76 by ROCK1 contribute to efficient separation of desmin intermediate filaments during mitosis. Ubiquitination by a SCF-like complex containing ASB2 leads to proteasomal degradation.

Its subcellular location is the cytoplasm. It is found in the myofibril. It localises to the sarcomere. The protein resides in the z line. The protein localises to the cell membrane. Its subcellular location is the sarcolemma. It is found in the nucleus. It localises to the cell tip. The protein resides in the nucleus envelope. Functionally, muscle-specific type III intermediate filament essential for proper muscular structure and function. Plays a crucial role in maintaining the structure of sarcomeres, inter-connecting the Z-disks and forming the myofibrils, linking them not only to the sarcolemmal cytoskeleton, but also to the nucleus and mitochondria, thus providing strength for the muscle fiber during activity. In adult striated muscle they form a fibrous network connecting myofibrils to each other and to the plasma membrane from the periphery of the Z-line structures. May act as a sarcomeric microtubule-anchoring protein: specifically associates with detyrosinated tubulin-alpha chains, leading to buckled microtubules and mechanical resistance to contraction. Required for nuclear membrane integrity, via anchoring at the cell tip and nuclear envelope, resulting in maintenance of microtubule-derived intracellular mechanical forces. Contributes to the transcriptional regulation of the NKX2-5 gene in cardiac progenitor cells during a short period of cardiomyogenesis and in cardiac side population stem cells in the adult. Plays a role in maintaining an optimal conformation of nebulette (NEB) on heart muscle sarcomeres to bind and recruit cardiac alpha-actin. The chain is Desmin (DES) from Canis lupus familiaris (Dog).